We begin with the raw amino-acid sequence, 304 residues long: Acetylxylan esterase A (304 aa).

Residues 1–19 (MVKLQYLLSILLYAYSCTA) form the signal peptide. Ser147 (charge relay system) is an active-site residue. Asn189 carries an N-linked (GlcNAc...) asparagine glycan.

It belongs to the carbohydrate esterase 1 (CE1) family. AxeA subfamily. As to quaternary structure, monomer.

It is found in the secreted. The enzyme catalyses Deacetylation of xylans and xylo-oligosaccharides.. Its pathway is glycan degradation; xylan degradation. Its function is as follows. Acetylxylan esterase involved in the hydrolysis of xylan, a major structural heterogeneous polysaccharide found in plant biomass representing the second most abundant polysaccharide in the biosphere, after cellulose. Degrades acetylated xylans by cleaving acetyl side groups from the hetero-xylan backbone. The sequence is that of Acetylxylan esterase A (axeA) from Emericella nidulans (strain FGSC A4 / ATCC 38163 / CBS 112.46 / NRRL 194 / M139) (Aspergillus nidulans).